Consider the following 37-residue polypeptide: Large ribosomal subunit protein bL36 (37 aa).

It belongs to the bacterial ribosomal protein bL36 family.

This Shewanella woodyi (strain ATCC 51908 / MS32) protein is Large ribosomal subunit protein bL36.